A 190-amino-acid polypeptide reads, in one-letter code: Potassium-transporting ATPase KdpC subunit (190 aa).

A helical transmembrane segment spans residues 10–30 (VLFAVLTLICGVIYPYAITGI).

It belongs to the KdpC family. As to quaternary structure, the system is composed of three essential subunits: KdpA, KdpB and KdpC.

It localises to the cell inner membrane. Part of the high-affinity ATP-driven potassium transport (or Kdp) system, which catalyzes the hydrolysis of ATP coupled with the electrogenic transport of potassium into the cytoplasm. This subunit acts as a catalytic chaperone that increases the ATP-binding affinity of the ATP-hydrolyzing subunit KdpB by the formation of a transient KdpB/KdpC/ATP ternary complex. In Herminiimonas arsenicoxydans, this protein is Potassium-transporting ATPase KdpC subunit.